A 165-amino-acid chain; its full sequence is Endoribonuclease YbeY (165 aa).

Zn(2+) is bound by residues His130, His134, and His140.

The protein belongs to the endoribonuclease YbeY family. The cofactor is Zn(2+).

It localises to the cytoplasm. Single strand-specific metallo-endoribonuclease involved in late-stage 70S ribosome quality control and in maturation of the 3' terminus of the 16S rRNA. The polypeptide is Endoribonuclease YbeY (Streptococcus pyogenes serotype M1).